The sequence spans 246 residues: Probable phosphatase AHA_1344 (246 aa).

H8, H10, H16, H41, E74, H102, H132, D193, and H195 together coordinate Zn(2+).

This sequence belongs to the PHP family. The cofactor is Zn(2+).

The protein is Probable phosphatase AHA_1344 of Aeromonas hydrophila subsp. hydrophila (strain ATCC 7966 / DSM 30187 / BCRC 13018 / CCUG 14551 / JCM 1027 / KCTC 2358 / NCIMB 9240 / NCTC 8049).